A 285-amino-acid chain; its full sequence is N(G),N(G)-dimethylarginine dimethylaminohydrolase 1 (285 aa).

A2 is modified (N-acetylalanine). Residues L30, D73, 78–79 (ED), R98, and R145 contribute to the substrate site. Residue H173 is the Proton donor of the active site. Position 222 is an S-nitrosocysteine (C222). V268 contributes to the substrate binding site. C274 bears the S-nitrosocysteine mark. C274 (nucleophile) is an active-site residue. C274 contributes to the Zn(2+) binding site.

Belongs to the DDAH family. As to quaternary structure, monomer. As to expression, detected in brain, liver, kidney and pancreas, and at low levels in skeletal muscle.

It catalyses the reaction N(omega),N(omega)-dimethyl-L-arginine + H2O = dimethylamine + L-citrulline. It carries out the reaction N(omega)-methyl-L-arginine + H2O = L-citrulline + methylamine. Inhibited by zinc ions. Enzyme purified in the absence of 1,10-phenanthroline contains on average 0.4 zinc atoms per subunit. Inhibited by 4-hydroxy-nonenal through the formation of a covalent adduct with His-173. Competitively inhibited by N(5)-iminopropyl-ornithine. Its function is as follows. Hydrolyzes N(G),N(G)-dimethyl-L-arginine (ADMA) and N(G)-monomethyl-L-arginine (MMA) which act as inhibitors of NOS. Has therefore a role in the regulation of nitric oxide generation. This is N(G),N(G)-dimethylarginine dimethylaminohydrolase 1 from Homo sapiens (Human).